A 480-amino-acid chain; its full sequence is Adenylosuccinate synthetase, chloroplastic (480 aa).

Residues 1–54 (MATARVMVADRARAFGGTTATRARRDDQGRRVTIARGIPSRARVVVARASERAY) constitute a chloroplast transit peptide. GTP contacts are provided by residues 69-75 (GDEGKGK) and 97-99 (GHT). Residue Asp-70 is the Proton acceptor of the active site. Positions 70 and 97 each coordinate Mg(2+). IMP-binding positions include 70 to 73 (DEGK), 95 to 98 (NAGH), Thr-187, Arg-201, Asn-278, Thr-293, and Arg-357. Residue His-98 is the Proton donor of the active site. 353–359 (TTTGRPR) is a binding site for substrate. Residues Arg-359, 385-387 (KLD), and 468-470 (GVG) contribute to the GTP site.

Belongs to the adenylosuccinate synthetase family. Homodimer. Mg(2+) is required as a cofactor.

It localises to the plastid. It is found in the chloroplast. It carries out the reaction IMP + L-aspartate + GTP = N(6)-(1,2-dicarboxyethyl)-AMP + GDP + phosphate + 2 H(+). It functions in the pathway purine metabolism; AMP biosynthesis via de novo pathway; AMP from IMP: step 1/2. Functionally, plays an important role in the de novo pathway and in the salvage pathway of purine nucleotide biosynthesis. Catalyzes the first committed step in the biosynthesis of AMP from IMP. The chain is Adenylosuccinate synthetase, chloroplastic from Ostreococcus tauri.